Here is a 274-residue protein sequence, read N- to C-terminus: MRKSILSFLEKKGKNEKITMVSAYDYHSAKILDNCDIDIILVGDSLAMIVLGMQDTLSVTMDEMLIFTKAVSRGAKKSFVLADMPFMSYQGSDRDAILNASRFIKESHANGVKVEGGIEIASKIKLISQSGIPVVAHLGLTPQAVNILGGYRIQGKDLQSAQKIIDDAKAVQDSGACMLVLECVPIKLAQKISSILEIPTIGIGSGKYCDGQVLVYHDLLGLNKDFKAKFVKHFDKIDPQIGVEKYRDEVKSGIFPSEEHSFDYLGEELLDKLY.

Residues Asp-44 and Asp-83 each coordinate Mg(2+). Residues 44–45, Asp-83, and Lys-113 each bind 3-methyl-2-oxobutanoate; that span reads DS. Position 115 (Glu-115) interacts with Mg(2+). Glu-182 (proton acceptor) is an active-site residue.

The protein belongs to the PanB family. In terms of assembly, homodecamer; pentamer of dimers. The cofactor is Mg(2+).

The protein resides in the cytoplasm. The catalysed reaction is 3-methyl-2-oxobutanoate + (6R)-5,10-methylene-5,6,7,8-tetrahydrofolate + H2O = 2-dehydropantoate + (6S)-5,6,7,8-tetrahydrofolate. It participates in cofactor biosynthesis; (R)-pantothenate biosynthesis; (R)-pantoate from 3-methyl-2-oxobutanoate: step 1/2. Functionally, catalyzes the reversible reaction in which hydroxymethyl group from 5,10-methylenetetrahydrofolate is transferred onto alpha-ketoisovalerate to form ketopantoate. The sequence is that of 3-methyl-2-oxobutanoate hydroxymethyltransferase from Campylobacter jejuni subsp. doylei (strain ATCC BAA-1458 / RM4099 / 269.97).